The primary structure comprises 120 residues: Large ribosomal subunit protein eL8 (120 aa).

The protein belongs to the eukaryotic ribosomal protein eL8 family. Part of the 50S ribosomal subunit. Probably part of the RNase P complex.

The protein localises to the cytoplasm. Functionally, multifunctional RNA-binding protein that recognizes the K-turn motif in ribosomal RNA, the RNA component of RNase P, box H/ACA, box C/D and box C'/D' sRNAs. This Methanosarcina acetivorans (strain ATCC 35395 / DSM 2834 / JCM 12185 / C2A) protein is Large ribosomal subunit protein eL8.